The primary structure comprises 109 residues: Small ribosomal subunit protein uS17 (109 aa).

This sequence belongs to the universal ribosomal protein uS17 family. Part of the 30S ribosomal subunit.

In terms of biological role, one of the primary rRNA binding proteins, it binds specifically to the 5'-end of 16S ribosomal RNA. The polypeptide is Small ribosomal subunit protein uS17 (Thermoplasma volcanium (strain ATCC 51530 / DSM 4299 / JCM 9571 / NBRC 15438 / GSS1)).